Here is a 165-residue protein sequence, read N- to C-terminus: Growth arrest and DNA damage-inducible protein GADD45 alpha (165 aa).

Phosphothreonine is present on Thr-2.

The protein belongs to the GADD45 family. As to quaternary structure, interacts with AURKA, PCNA, GADD45GIP1 and MAPK14.

It localises to the nucleus. Its function is as follows. Might affect PCNA interaction with some CDK (cell division protein kinase) complexes; stimulates DNA excision repair in vitro and inhibits entry of cells into S phase. In T-cells, functions as a regulator of p38 MAPKs by inhibiting p88 phosphorylation and activity. This is Growth arrest and DNA damage-inducible protein GADD45 alpha (GADD45A) from Felis catus (Cat).